A 519-amino-acid chain; its full sequence is RxLR effector protein PITG_15278 (519 aa).

The N-terminal stretch at 1-24 (MHFIYRVVLVLAAFALFKVDSISA) is a signal peptide. Residues 49–59 (RQLRVMDDNER) carry the RxLR-dEER motif.

This sequence belongs to the RxLR effector family.

It localises to the secreted. Its subcellular location is the host cytoplasm. Its function is as follows. Effector that enhances P.infestans colonization of Nicotiana benthamiana leaves. The polypeptide is RxLR effector protein PITG_15278 (Phytophthora infestans (strain T30-4) (Potato late blight agent)).